A 219-amino-acid polypeptide reads, in one-letter code: Capsid protein (219 aa).

Positions 5 to 29 (RRRRVVRRRKPVRRLRRRRRRFFKR) are nuclear localization signals.

This sequence belongs to the circoviridae capsid protein family. In terms of assembly, homomultimer. Assembles in the nucleus, presumably in an immature form, then migrates to the cytoplasm once assembled as mature virion. Interacts with Rep; this interaction relocates Rep into the nucleus.

The protein localises to the host nucleus. The protein resides in the virion. Functionally, self-assembles to form the virion icosahedral capsid with a T=1 symmetry. This very small capsid (17-22 nm in diameter) allows the virus to be very stable in the environment and resistant to some disinfectants, including detergents. Essential for the initial attachment to heparan sulfate moieties and chondroitin sulfate B of the host cell surface proteoglycans. After attachment, the virus is endocytosed and traffics to the nucleus. The capsid protein binds and transports the viral genome and Rep across the nuclear envelope. This Homo sapiens (Human) protein is Capsid protein (Cap).